The primary structure comprises 118 residues: Large ribosomal subunit protein bL17 (118 aa).

The protein belongs to the bacterial ribosomal protein bL17 family. As to quaternary structure, part of the 50S ribosomal subunit. Contacts protein L32.

This chain is Large ribosomal subunit protein bL17, found in Campylobacter concisus (strain 13826).